Here is a 511-residue protein sequence, read N- to C-terminus: Small ribosomal subunit protein uS4m (511 aa).

Residues 202–272 form the S4 RNA-binding domain; it reads KRLDVVLYRS…IKNNLFSNIN (71 aa).

The protein belongs to the universal ribosomal protein uS4 family.

It localises to the mitochondrion. The protein is Small ribosomal subunit protein uS4m (RPS4) of Prototheca wickerhamii.